The primary structure comprises 365 residues: MSLGRVTVTAVRNLHPVTLNPSPRINILYGPNGSGKTSLLEAIHLLGLARSFRSQRLSPVIQHEQPACTVFGQVLWNDGRVRNLGVARNRLGELQIRIDGQNVRSAAQLAESLPLQLINPDSFRLLEGAPKVRRQFLDWGVFHVEQRFLPAWHRLQTALRQRNSWLRHGRIDPVSQAAWDRELCLASEEIDSYRRSYIQVLKPVFESVLHELVELDGLTLSYYRGWDRERSLGEVLAASLPRDQQLGHTQAGPQRADLRLRLAAHNAADLLSRGQQKLVVCALKIAQGHLVDRARRECIYLVDDLPSELDEQHRRALCRLLEELHCQVFITCVDLEALREGWRTDTPVALFHVEQGRITQTHDRE.

Residue 30–37 (GPNGSGKT) participates in ATP binding.

The protein belongs to the RecF family.

It localises to the cytoplasm. In terms of biological role, the RecF protein is involved in DNA metabolism; it is required for DNA replication and normal SOS inducibility. RecF binds preferentially to single-stranded, linear DNA. It also seems to bind ATP. This chain is DNA replication and repair protein RecF, found in Azotobacter vinelandii (strain DJ / ATCC BAA-1303).